The sequence spans 114 residues: Large ribosomal subunit protein uL24 (114 aa).

The protein belongs to the universal ribosomal protein uL24 family. In terms of assembly, part of the 50S ribosomal subunit.

Functionally, one of two assembly initiator proteins, it binds directly to the 5'-end of the 23S rRNA, where it nucleates assembly of the 50S subunit. One of the proteins that surrounds the polypeptide exit tunnel on the outside of the subunit. The protein is Large ribosomal subunit protein uL24 of Acidothermus cellulolyticus (strain ATCC 43068 / DSM 8971 / 11B).